The primary structure comprises 1562 residues: Cell wall protein RBR3 (1562 aa).

An N-terminal signal peptide occupies residues 1–20; that stretch reads MIIFRKSFFTFWLLLNSVLA. N-linked (GlcNAc...) asparagine glycosylation occurs at Asn-190. Residues 338 to 353 show a composition bias toward low complexity; that stretch reads APGTNPTEYTTTITTT. Positions 338-366 are disordered; it reads APGTNPTEYTTTITTTNSAGKPLTETGVV. A glycan (N-linked (GlcNAc...) asparagine) is linked at Asn-373. Composition is skewed to low complexity over residues 383 to 415 and 422 to 729; these read FPTS…SQPS and SSSK…ISAT. Disordered stretches follow at residues 383–729, 1404–1424, and 1455–1486; these read FPTS…ISAT, GSGS…SSSN, and YSSG…GNSN. 3 N-linked (GlcNAc...) asparagine glycosylation sites follow: Asn-602, Asn-679, and Asn-705. The segment covering 1407 to 1419 has biased composition (gly residues); sequence SDSGSGSGSGSGS. Residues 1468 to 1486 show a composition bias toward polar residues; it reads GANNVGSNQTPTVSGGNSN. The GPI-anchor amidated asparagine moiety is linked to residue Asn-1538. A propeptide spans 1539–1562 (removed in mature form); the sequence is SGSKFSVGKSAFIAIILTTFIGFI.

It belongs to the HYR1/IFF family. The GPI-anchor is attached to the protein in the endoplasmic reticulum and serves to target the protein to the cell surface. There, the glucosamine-inositol phospholipid moiety is cleaved off and the GPI-modified mannoprotein is covalently attached via its lipidless GPI glycan remnant to the 1,6-beta-glucan of the outer cell wall layer.

Its subcellular location is the secreted. The protein resides in the cell wall. The protein localises to the membrane. Functionally, GPI-anchored cell wall protein involved in cell wall organization, hyphal growth, as well as in host-fungal interaction and virulence. In Candida albicans (strain SC5314 / ATCC MYA-2876) (Yeast), this protein is Cell wall protein RBR3 (RBR3).